The primary structure comprises 131 residues: Small ribosomal subunit protein eS8 (131 aa).

Residues 15–36 (PSGGKKGRVRKTKKKALGGGPP) are disordered. The segment covering 17 to 30 (GGKKGRVRKTKKKA) has biased composition (basic residues).

The protein belongs to the eukaryotic ribosomal protein eS8 family. Part of the 30S ribosomal subunit.

In Pyrobaculum calidifontis (strain DSM 21063 / JCM 11548 / VA1), this protein is Small ribosomal subunit protein eS8.